The primary structure comprises 509 residues: Coiled-coil domain-containing protein 181 (509 aa).

Disordered stretches follow at residues 27–122 (INDK…EDEE) and 287–368 (LAQV…NEKK). Basic and acidic residues-rich tracts occupy residues 41 to 58 (ACKK…KETE) and 67 to 82 (DPDK…RRND). The span at 319–333 (RIQSAGVSPVTSTYC) shows a compositional bias: polar residues. Coiled-coil stretches lie at residues 335–377 (SPRQ…VFKA) and 418–488 (LKKK…RSKQ). Residues 337–368 (RQKELQKQLERKRERLKREEEQRKLEEENEKK) are compositionally biased toward basic and acidic residues.

The protein belongs to the CCDC181 family. As to quaternary structure, homodimer. Interacts with HOOK1. Interacts with HOOK2. Interacts with HOOK3.

The protein resides in the cytoplasm. It localises to the cytoskeleton. The protein localises to the cell projection. It is found in the cilium. Its subcellular location is the flagellum. Functionally, microtubule-binding protein that localizes to the microtubular manchette of elongating spermatids. The chain is Coiled-coil domain-containing protein 181 from Rattus norvegicus (Rat).